Reading from the N-terminus, the 300-residue chain is Homoserine kinase (300 aa).

87-97 (PISRGLGSSSA) is a binding site for ATP.

Belongs to the GHMP kinase family. Homoserine kinase subfamily.

It is found in the cytoplasm. It catalyses the reaction L-homoserine + ATP = O-phospho-L-homoserine + ADP + H(+). It functions in the pathway amino-acid biosynthesis; L-threonine biosynthesis; L-threonine from L-aspartate: step 4/5. In terms of biological role, catalyzes the ATP-dependent phosphorylation of L-homoserine to L-homoserine phosphate. This chain is Homoserine kinase, found in Clostridium kluyveri (strain ATCC 8527 / DSM 555 / NBRC 12016 / NCIMB 10680 / K1).